A 197-amino-acid chain; its full sequence is Imidazoleglycerol-phosphate dehydratase (197 aa).

This sequence belongs to the imidazoleglycerol-phosphate dehydratase family.

Its subcellular location is the cytoplasm. The catalysed reaction is D-erythro-1-(imidazol-4-yl)glycerol 3-phosphate = 3-(imidazol-4-yl)-2-oxopropyl phosphate + H2O. It functions in the pathway amino-acid biosynthesis; L-histidine biosynthesis; L-histidine from 5-phospho-alpha-D-ribose 1-diphosphate: step 6/9. This Pseudomonas fluorescens (strain SBW25) protein is Imidazoleglycerol-phosphate dehydratase.